Here is a 287-residue protein sequence, read N- to C-terminus: Cell division protein ZipA (287 aa).

Position 1 (Met1) is a topological domain, periplasmic. A helical transmembrane segment spans residues 2–22 (EIGLREWLIVIGIIVIAGILF). The Cytoplasmic portion of the chain corresponds to 23-287 (DGWRRMRGSK…ERRALTQRRG (265 aa)). The interval 48–140 (DEEETTSAEV…PTQRITEDKD (93 aa)) is disordered. Basic and acidic residues-rich tracts occupy residues 64–77 (LDTHKEPQLDEHDL), 85–104 (REGKRSNSDKRSDKKRKDEP), and 121–140 (GRDDDFPDDKPTQRITEDKD).

This sequence belongs to the ZipA family. In terms of assembly, interacts with FtsZ via their C-terminal domains.

Its subcellular location is the cell inner membrane. Its function is as follows. Essential cell division protein that stabilizes the FtsZ protofilaments by cross-linking them and that serves as a cytoplasmic membrane anchor for the Z ring. Also required for the recruitment to the septal ring of downstream cell division proteins. This Pseudomonas syringae pv. syringae (strain B728a) protein is Cell division protein ZipA.